A 119-amino-acid polypeptide reads, in one-letter code: Acidic phospholipase A2 E (119 aa).

Cystine bridges form between cysteine 11-cysteine 71, cysteine 26-cysteine 118, cysteine 28-cysteine 44, cysteine 43-cysteine 99, cysteine 50-cysteine 92, cysteine 60-cysteine 85, and cysteine 78-cysteine 90. Ca(2+) is bound by residues tyrosine 27, glycine 29, and glycine 31. Residue histidine 47 is part of the active site. Position 48 (aspartate 48) interacts with Ca(2+). Aspartate 93 is a catalytic residue.

It belongs to the phospholipase A2 family. Group I subfamily. D49 sub-subfamily. The cofactor is Ca(2+). In terms of tissue distribution, expressed by the venom gland.

It is found in the secreted. It catalyses the reaction a 1,2-diacyl-sn-glycero-3-phosphocholine + H2O = a 1-acyl-sn-glycero-3-phosphocholine + a fatty acid + H(+). Its function is as follows. PLA2 catalyzes the calcium-dependent hydrolysis of the 2-acyl groups in 3-sn-phosphoglycerides. The chain is Acidic phospholipase A2 E from Naja oxiana (Central Asian cobra).